The primary structure comprises 72 residues: DNA gyrase inhibitor YacG (72 aa).

Positions 17, 20, 32, and 36 each coordinate Zn(2+). The segment at 51 to 72 (IPGPEEEEMSYPPRSDDENRSR) is disordered.

This sequence belongs to the DNA gyrase inhibitor YacG family. Interacts with GyrB. Zn(2+) serves as cofactor.

Its function is as follows. Inhibits all the catalytic activities of DNA gyrase by preventing its interaction with DNA. Acts by binding directly to the C-terminal domain of GyrB, which probably disrupts DNA binding by the gyrase. The sequence is that of DNA gyrase inhibitor YacG from Methylorubrum extorquens (strain PA1) (Methylobacterium extorquens).